Reading from the N-terminus, the 525-residue chain is MPCACNRSNWRRWIRPLLVLFYATTILVAVPICIWKFQKMKVGMHTKSWFIAGIFLLLTIPVSLWGILQHLVHYTQPELQKPIIRILWMVPIYSVDSWVALVYPKIAIYVDTWRECYEAYVIYNFMIFLTNYLTIRFPNLILHLEAKDQQNHILPLCCCPPWAMGEMLLFRCKLGVLQYTVVRPITTVTALVCEILDVYDEGNFGFSNAWTYLVILNNLSQLFAMYCLLLFYKVLKEELSPIQPVGKFLCVKLVVFVSFWQAVLIALLVKLGVISEKRTWEWQSAEAVATGLQDFIICIEMFFAAIAHHYTFSYKPYVHEAEEGSCFDSFLAMWDVSDIRDDISEQVRRVGRTMRGYPKKKCFPGDPDHNEHSSLLSSSSQDLTSGSSKVPSPGGLYQGFGHTISSQSPISIASIYEEIMNDIPEEQQKLLNPGQDVTINIPEEQQKLIDKRKDVMIDIPEQNAIPDNSQYQDQEQIVTLQALFPSTETSENSMIDTSESQQESSDLCTESSDSSTESSDLSTDP.

7 consecutive transmembrane segments (helical) span residues 17–37, 48–68, 83–103, 121–141, 212–232, 254–274, and 287–307; these read LLVL…IWKF, SWFI…WGIL, IIRI…ALVY, VIYN…PNLI, YLVI…LLFY, VVFV…LGVI, and AVAT…AAIA. Disordered regions lie at residues 358–394 and 483–525; these read PKKK…PSPG and LFPS…STDP. The span at 373 to 388 shows a compositional bias: low complexity; sequence SSLLSSSSQDLTSGSS. Over residues 483–502 the composition is skewed to polar residues; it reads LFPSTETSENSMIDTSESQQ. Residues 503–525 show a composition bias toward low complexity; that stretch reads ESSDLCTESSDSSTESSDLSTDP.

Belongs to the TMEM184 family.

Its subcellular location is the membrane. Its function is as follows. Possible tumor suppressor which may play a role in cell growth. The sequence is that of Transmembrane protein 184C (Tmem184c) from Mus musculus (Mouse).